A 277-amino-acid polypeptide reads, in one-letter code: Small ribosomal subunit protein uS5 (277 aa).

Residues 18 to 40 (AAGRPSWSWQRPGERARTPGRKA) form a disordered region. Positions 29 to 40 (PGERARTPGRKA) are enriched in basic and acidic residues. The S5 DRBM domain occupies 87 to 150 (LKDEVLKIMP…ILAKLSIIPV (64 aa)).

The protein belongs to the universal ribosomal protein uS5 family. In terms of assembly, component of the small ribosomal subunit.

The protein localises to the cytoplasm. Its subcellular location is the nucleus. It is found in the nucleolus. In terms of biological role, component of the ribosome, a large ribonucleoprotein complex responsible for the synthesis of proteins in the cell. The small ribosomal subunit (SSU) binds messenger RNAs (mRNAs) and translates the encoded message by selecting cognate aminoacyl-transfer RNA (tRNA) molecules. The large subunit (LSU) contains the ribosomal catalytic site termed the peptidyl transferase center (PTC), which catalyzes the formation of peptide bonds, thereby polymerizing the amino acids delivered by tRNAs into a polypeptide chain. The nascent polypeptides leave the ribosome through a tunnel in the LSU and interact with protein factors that function in enzymatic processing, targeting, and the membrane insertion of nascent chains at the exit of the ribosomal tunnel. Plays a role in the assembly and function of the 40S ribosomal subunit. Mutations in this protein affects the control of translational fidelity. Involved in nucleolar processing of pre-18S ribosomal RNA and ribosome assembly. This Ictalurus punctatus (Channel catfish) protein is Small ribosomal subunit protein uS5 (rps2).